Reading from the N-terminus, the 132-residue chain is Ribonuclease P protein component (132 aa).

Belongs to the RnpA family. In terms of assembly, consists of a catalytic RNA component (M1 or rnpB) and a protein subunit.

It catalyses the reaction Endonucleolytic cleavage of RNA, removing 5'-extranucleotides from tRNA precursor.. Functionally, RNaseP catalyzes the removal of the 5'-leader sequence from pre-tRNA to produce the mature 5'-terminus. It can also cleave other RNA substrates such as 4.5S RNA. The protein component plays an auxiliary but essential role in vivo by binding to the 5'-leader sequence and broadening the substrate specificity of the ribozyme. In Marinobacter nauticus (strain ATCC 700491 / DSM 11845 / VT8) (Marinobacter aquaeolei), this protein is Ribonuclease P protein component.